The sequence spans 71 residues: Small ribosomal subunit protein bS18 (71 aa).

It belongs to the bacterial ribosomal protein bS18 family. In terms of assembly, part of the 30S ribosomal subunit. Forms a tight heterodimer with protein bS6.

Its function is as follows. Binds as a heterodimer with protein bS6 to the central domain of the 16S rRNA, where it helps stabilize the platform of the 30S subunit. The polypeptide is Small ribosomal subunit protein bS18 (Microcystis aeruginosa (strain NIES-843 / IAM M-2473)).